The primary structure comprises 285 residues: Bifunctional protein FolD (285 aa).

NADP(+) is bound by residues 165–167 (GRS) and S190.

Belongs to the tetrahydrofolate dehydrogenase/cyclohydrolase family. As to quaternary structure, homodimer.

It catalyses the reaction (6R)-5,10-methylene-5,6,7,8-tetrahydrofolate + NADP(+) = (6R)-5,10-methenyltetrahydrofolate + NADPH. It carries out the reaction (6R)-5,10-methenyltetrahydrofolate + H2O = (6R)-10-formyltetrahydrofolate + H(+). It participates in one-carbon metabolism; tetrahydrofolate interconversion. Catalyzes the oxidation of 5,10-methylenetetrahydrofolate to 5,10-methenyltetrahydrofolate and then the hydrolysis of 5,10-methenyltetrahydrofolate to 10-formyltetrahydrofolate. The chain is Bifunctional protein FolD from Burkholderia pseudomallei (strain 1710b).